Here is a 482-residue protein sequence, read N- to C-terminus: Rhamnulokinase (482 aa).

Alanine 13–arginine 17 contacts ATP. Substrate-binding positions include glycine 83 and histidine 232–threonine 234. The active-site Proton acceptor is aspartate 233. An ATP-binding site is contributed by threonine 255. Substrate is bound at residue asparagine 292. Asparagine 300 serves as a coordination point for ATP. Cysteines 349 and 366 form a disulfide. Glycine 398 is an ATP binding site. Cysteine 409 and cysteine 413 are oxidised to a cystine.

This sequence belongs to the rhamnulokinase family. The cofactor is Mg(2+).

The enzyme catalyses L-rhamnulose + ATP = L-rhamnulose 1-phosphate + ADP + H(+). It functions in the pathway carbohydrate degradation; L-rhamnose degradation; glycerone phosphate from L-rhamnose: step 2/3. In terms of biological role, involved in the catabolism of L-rhamnose (6-deoxy-L-mannose). Catalyzes the transfer of the gamma-phosphate group from ATP to the 1-hydroxyl group of L-rhamnulose to yield L-rhamnulose 1-phosphate. The sequence is that of Rhamnulokinase from Mannheimia succiniciproducens (strain KCTC 0769BP / MBEL55E).